A 776-amino-acid chain; its full sequence is Mitochondrial intermediate peptidase (776 aa).

The N-terminal 28 residues, 1 to 28, are a transit peptide targeting the mitochondrion; sequence MFVRFYKRLDRQYIQSQRRWILSSNKCL. The tract at residues 48–71 is disordered; the sequence is DHWEESQAQNTSSEQDNKGKNSSY. The span at 53-71 shows a compositional bias: polar residues; the sequence is SQAQNTSSEQDNKGKNSSY. His567 provides a ligand contact to Zn(2+). Glu568 is a catalytic residue. The Zn(2+) site is built by His571 and His574.

Belongs to the peptidase M3 family. Requires Zn(2+) as cofactor.

The protein resides in the mitochondrion matrix. It carries out the reaction Release of an N-terminal octapeptide as second stage of processing of some proteins imported into the mitochondrion.. Cleaves proteins, imported into the mitochondrion, to their mature size. While most mitochondrial precursor proteins are processed to the mature form in one step by mitochondrial processing peptidase (MPP), the sequential cleavage by MIP of an octapeptide after initial processing by MPP is a required step for a subgroup of nuclear-encoded precursor proteins destined for the matrix or the inner membrane. The chain is Mitochondrial intermediate peptidase (OCT1) from Eremothecium gossypii (strain ATCC 10895 / CBS 109.51 / FGSC 9923 / NRRL Y-1056) (Yeast).